A 263-amino-acid chain; its full sequence is Lysine 5,6-aminomutase beta subunit (263 aa).

In terms of domain architecture, B12-binding spans 120–259; it reads EVVMVGASTG…TFILKEMVQR (140 aa). Adenosylcob(III)alamin-binding positions include 130–136 and His-133; that span reads TDAHTVG. At Lys-144 the chain carries N6-(pyridoxal phosphate)lysine. Residues 185–192, 219–223, and 239–244 contribute to the adenosylcob(III)alamin site; these read LVSQTVTQ, IAGGA, and FGPGKY.

The protein belongs to the KamE family. As to quaternary structure, heterotetramer of 2 alpha and 2 beta subunits. It depends on adenosylcob(III)alamin as a cofactor. Pyridoxal 5'-phosphate is required as a cofactor.

The enzyme catalyses (3S)-3,6-diaminohexanoate = (3S,5S)-3,5-diaminohexanoate. The catalysed reaction is D-lysine = (2R,5S)-2,5-diaminohexanoate. Its pathway is amino-acid degradation; L-lysine degradation via acetate pathway. Its function is as follows. Catalyzes the migration of the L-beta-lysine and D-lysine epsilon amino group to the delta carbon to produce 3,5-diaminohexanoate and 2,5-diaminohexanoate, respectively. This is Lysine 5,6-aminomutase beta subunit from Fusobacterium nucleatum subsp. nucleatum (strain ATCC 25586 / DSM 15643 / BCRC 10681 / CIP 101130 / JCM 8532 / KCTC 2640 / LMG 13131 / VPI 4355).